Consider the following 444-residue polypeptide: Mitogen-activated protein kinase mpk-1 (444 aa).

Polar residues-rich tracts occupy residues 1–17 (MPTWIPNNLCAQPTTRN) and 24–56 (GHPQATQQQSAPGSLAYRNSSNIPNGATNHVRQ). A disordered region spans residues 1–56 (MPTWIPNNLCAQPTTRNAKPPSNGHPQATQQQSAPGSLAYRNSSNIPNGATNHVRQ). Residues 96-384 (YVNLSYIGEG…IEQALAHPYL (289 aa)) enclose the Protein kinase domain. ATP contacts are provided by residues 102-110 (IGEGAYGMV) and K125. The active-site Proton acceptor is D220. Residue T256 is modified to Phosphothreonine. Residues 256 to 258 (TEY) carry the TXY motif. Y258 is subject to Phosphotyrosine.

Belongs to the protein kinase superfamily. CMGC Ser/Thr protein kinase family. MAP kinase subfamily. As to quaternary structure, isoform a interacts with gck-1 (via N-terminus). The cofactor is Mg(2+). Post-translationally, isoform a is phosphorylated at the pachytene stage during oogenesis and is negatively regulated by gck-1. Isoform b is phosphorylated in proximal oocytes. As to expression, expressed in cells lining the rectum. Isoform a is expressed in nervous system, body wall muscles and posterior intestine. Isoform b expression may be restricted to germline.

The catalysed reaction is L-seryl-[protein] + ATP = O-phospho-L-seryl-[protein] + ADP + H(+). It catalyses the reaction L-threonyl-[protein] + ATP = O-phospho-L-threonyl-[protein] + ADP + H(+). Activated by dual phosphorylation at Thr-256 and Tyr-258. May be inactivated by lip-1-mediated dephosphorylation. In terms of biological role, functions in let-60 Ras signaling pathway; acts downstream of lin-45 raf kinase, but before the lin-1 gene product in controlling vulval cell differentiation. Plays a negative role in proximal germline proliferation in the mitotic zone. Required for progression of developing oocytes through the pachytene stage, perhaps acting after efl-1/dpl-1-mediated gene activation and before gld-1 down-regulation. May play a role in global X chromosome reactivation or be indirectly required for progression of germ cells through meiosis to the point where X reactivation occurs. In oocytes, inhibits the activity of the chloride channel clh-3, likely by activating gck-3. Plays a role in response to M.nematophilum-mediated bacterial infection by promoting tail swelling and preventing constipation. Involved in fluid homeostasis. In addition, involved in the up-regulation of lysozyme ilys-3 expression in the intestine in responses to M.nematophilum-mediated bacterial infection. By phosphorylating transcription factor skn-1 (isoform c) may play a role in increasing life span downstream of lin-45, let-60 and mek-2. By up-regulating cep-1 and down-regulating gld-1 expression in the late pachytene stage, plays a role in germline apoptosis in response to DNA damage. Regulates egl-1 expression in response to DNA damage, probably upstream of cep-1. Suppresses germline tumor formation by preventing the dedifferentiation of secondary spermatocytes probably upstream of rskn-1. The sequence is that of Mitogen-activated protein kinase mpk-1 (mpk-1) from Caenorhabditis elegans.